Consider the following 574-residue polypeptide: Calcium-dependent protein kinase 9 (574 aa).

The tract at residues 1–64 (MGNTCCVAPA…RARAKPNPYD (64 aa)) is disordered. Residue Gly2 is the site of N-myristoyl glycine attachment. Residues 28-40 (KSPAPSATTTTAT) show a composition bias toward low complexity. Positions 101–359 (YQLGRELGRG…AQQVLDHPWL (259 aa)) constitute a Protein kinase domain. ATP is bound by residues 107 to 115 (LGRGEFGVT) and Lys130. Asp225 functions as the Proton acceptor in the catalytic mechanism. An autoinhibitory domain region spans residues 365 to 395 (APNVPLGDVVRARLKQFSLMNRLKKKAMRVI). EF-hand domains lie at 402 to 437 (EEVE…VGSK), 438 to 473 (LAEP…LQRL), 474 to 509 (SNDN…DSGH), and 510 to 545 (ADDA…GTDW). The Ca(2+) site is built by Asp415, Asp417, Asn419, Arg421, Glu426, Asp451, Asp453, Asn455, Tyr457, Glu462, Asp487, Asp489, Ser491, Tyr493, Glu498, Asp523, Asp525, Asp527, Arg529, and Glu534.

Belongs to the protein kinase superfamily. Ser/Thr protein kinase family. CDPK subfamily. In terms of tissue distribution, expressed in leaf blades and stems. Expressed at low levels in anthers and spikelets.

It localises to the membrane. The catalysed reaction is L-seryl-[protein] + ATP = O-phospho-L-seryl-[protein] + ADP + H(+). The enzyme catalyses L-threonyl-[protein] + ATP = O-phospho-L-threonyl-[protein] + ADP + H(+). Its activity is regulated as follows. Activated by calcium. Autophosphorylation may play an important role in the regulation of the kinase activity. May play a role in signal transduction pathways that involve calcium as a second messenger. Functions in signal transduction pathways that positively regulate responses to drought, osmotic, and dehydration stress. Regulates expression of stress-associated genes in response to drought. Involved in tolerance to drought stress by increasing proline and soluble sugars, and improving stomatal closure. Required for pollen maturation and spikelet fertility. This chain is Calcium-dependent protein kinase 9, found in Oryza sativa subsp. japonica (Rice).